Reading from the N-terminus, the 135-residue chain is Large ribosomal subunit protein uL16c (135 aa).

This sequence belongs to the universal ribosomal protein uL16 family. In terms of assembly, part of the 50S ribosomal subunit.

Its subcellular location is the plastid. The protein localises to the chloroplast. The chain is Large ribosomal subunit protein uL16c from Platanus occidentalis (Sycamore).